The chain runs to 436 residues: UDP-N-acetylmuramate--L-alanine ligase (436 aa).

108-114 (GAHGKTS) contributes to the ATP binding site.

Belongs to the MurCDEF family.

It is found in the cytoplasm. It carries out the reaction UDP-N-acetyl-alpha-D-muramate + L-alanine + ATP = UDP-N-acetyl-alpha-D-muramoyl-L-alanine + ADP + phosphate + H(+). Its pathway is cell wall biogenesis; peptidoglycan biosynthesis. In terms of biological role, cell wall formation. The sequence is that of UDP-N-acetylmuramate--L-alanine ligase from Bacillus cereus (strain AH187).